We begin with the raw amino-acid sequence, 306 residues long: Pantothenate kinase (306 aa).

Position 91–98 (91–98 (GSVAVGKS)) interacts with ATP.

The protein belongs to the prokaryotic pantothenate kinase family.

Its subcellular location is the cytoplasm. It carries out the reaction (R)-pantothenate + ATP = (R)-4'-phosphopantothenate + ADP + H(+). Its pathway is cofactor biosynthesis; coenzyme A biosynthesis; CoA from (R)-pantothenate: step 1/5. This chain is Pantothenate kinase, found in Streptococcus pyogenes serotype M49 (strain NZ131).